Here is a 764-residue protein sequence, read N- to C-terminus: Bifunctional type I diterpene synthase tndC (764 aa).

The interval methionine 1–tyrosine 324 is terpene cyclase. Positions 92 and 96 each coordinate Mg(2+). Positions aspartate 92 to aspartate 96 match the DDXXD 1 motif. The short motif at asparagine 224 to glutamate 232 is the NSE/DTE element. The tract at residues asparagine 325 to leucine 761 is prenyltransferase. The segment at alanine 377–valine 403 is disordered. Residues asparagine 381–glycine 391 show a composition bias toward polar residues. Residues lysine 484, arginine 487, and histidine 516 each coordinate isopentenyl diphosphate. Positions 523 and 527 each coordinate Mg(2+). The DDXXD 2 signature appears at aspartate 523–aspartate 527. Arginine 532 is a binding site for dimethylallyl diphosphate. Position 533 (arginine 533) interacts with isopentenyl diphosphate. Dimethylallyl diphosphate is bound by residues lysine 610, threonine 611, glutamine 646, asparagine 653, lysine 663, and lysine 673.

It in the N-terminal section; belongs to the terpene synthase family. The protein in the C-terminal section; belongs to the FPP/GGPP synthase family.

The catalysed reaction is isopentenyl diphosphate + (2E,6E)-farnesyl diphosphate = (2E,6E,10E)-geranylgeranyl diphosphate + diphosphate. It carries out the reaction (2E,6E,10E)-geranylgeranyl diphosphate = talarodiene + diphosphate. It participates in secondary metabolite biosynthesis; terpenoid biosynthesis. Functionally, bifunctional type I diterpene synthase; part of the gene cluster that mediates the biosynthesis of talaronoid C, a fusicoccane diterpenoid with an unprecedented tricyclic 5/8/6 ring system. The first step in the pathway is performed by the fusicoccadiene synthase tndC that possesses both prenyl transferase and terpene cyclase activity, converting isopentenyl diphosphate and dimethylallyl diphosphate into geranylgeranyl diphosphate (GGDP) and further converting GGDP into talarodiene, a precursor for talaronoid C. The remaining enzymes from the cluster include the cytochrome P450 monooxygenase tndB, the aldehyde reductase tndE and the alcohol dehydrogenase tndF that are involved in the conversion of talarodiene into talaronoid C. In Aspergillus flavipes, this protein is Bifunctional type I diterpene synthase tndC.